The sequence spans 253 residues: Chemokine-binding protein (253 aa).

A signal peptide spans Met1 to Met17. The interval Thr62–Pro87 is disordered. Residues Thr65–Asp86 show a composition bias toward acidic residues.

Belongs to the orthopoxvirus OPG001 family. Binds to host CC chemokines, such as RANTES/CCL5, MIP-1alpha/CCL3, MCP-1/CCL2 and eotaxin.

The protein resides in the secreted. Functionally, inhibits host immune defense by binding to host chemokines. Binds host CC chemokines (beta chemokines) such as RANTES with high affinity, but not CXC or C chemokines (alpha and gamma chemokines). This is Chemokine-binding protein (OPG001) from Variola virus (isolate Human/India/Ind3/1967) (VARV).